The sequence spans 825 residues: Osmosensitive cation channel TMEM63C (825 aa).

Residues 1–50 lie on the Extracellular side of the membrane; that stretch reads MAFESWPAGGVRPVEELDVRSFLMEENSTAERCYRSHSRSSVLQGLPFGG. The chain crosses the membrane as a helical span at residues 51-75; it reads VPTVLAINVVLWLILLLIFSCLRKA. Residues 76 to 141 lie on the Cytoplasmic side of the membrane; it reads AWDYGRLALL…KDEEIRSKCG (66 aa). The disordered stretch occupies residues 98-117; that stretch reads EQSEKEKTPSDSSPSDSETK. The chain crosses the membrane as a helical span at residues 142 to 174; it reads IDAVTYLSFQRHIILLMMVVCLLSLTIILPVNL. The Extracellular portion of the chain corresponds to 175–198; it reads SGNLLGDNPENFGRTTVVNVPAQN. Residues 199-223 form a helical membrane-spanning segment; it reads IFLWLHSIFALLYFVITVLCMAHHS. The Cytoplasmic portion of the chain corresponds to 224-418; it reads SRLEYREDEK…IIWENLSVCG (195 aa). Residues 419–448 form a helical membrane-spanning segment; that stretch reads PRWWLRCILLNILLFLLLFFLTTPAIIVNT. The Extracellular portion of the chain corresponds to 449 to 463; it reads MDKFNVTRPVESLRN. The chain crosses the membrane as a helical span at residues 464–493; it reads PVITQFFPTLLLWAFSILLPFIVYYSSFFE. Residues 494 to 497 lie on the Cytoplasmic side of the membrane; it reads YHWT. Residues 498–534 traverse the membrane as a helical segment; it reads RSGENQVTMHKCFLLLVFMVIILPSLGLSSLNLFFRW. The Extracellular portion of the chain corresponds to 535 to 557; that stretch reads LFDVRFLDETDVKFQCVFLPDNG. The helical transmembrane segment at 558 to 590 threads the bilayer; the sequence is AFFVNYVITSSLIGTAMELLRIPALLVYSLRLC. Over 591–610 the chain is Cytoplasmic; the sequence is FAKSKAECIHVKISQAYEFQ. A helical transmembrane segment spans residues 611–629; sequence FGLEYAWTMCIFSVSMTYS. Residues 630–632 are Extracellular-facing; that stretch reads ITC. A helical transmembrane segment spans residues 633–657; sequence PVIVPFGLLYLVLKHMVDRYNIYYA. Topologically, residues 658 to 664 are cytoplasmic; it reads YTPTKLN. The chain crosses the membrane as a helical span at residues 665–693; the sequence is QRIHAAAISQVVVAPILCMFWLLFFSVLR. Topologically, residues 694-698 are extracellular; that stretch reads LGPVQ. A helical transmembrane segment spans residues 699–719; it reads PITLFTFITLLCSIAFSCFGF. Over 720–825 the chain is Cytoplasmic; sequence CMKKLRADRS…LLMDSPVAFQ (106 aa). Residues 777 to 825 are disordered; the sequence is SPAHQSYGTMVNSQSSVRDAEEDEEKDLEETLETELKDDLLMDSPVAFQ. Over residues 779 to 793 the composition is skewed to polar residues; it reads AHQSYGTMVNSQSSV. Positions 796-809 are enriched in acidic residues; it reads AEEDEEKDLEETLE.

Belongs to the CSC1 (TC 1.A.17) family. Monomer.

It is found in the endoplasmic reticulum membrane. Its subcellular location is the cell membrane. It carries out the reaction Ca(2+)(in) = Ca(2+)(out). Functionally, acts as an osmosensitive cation channel preferentially activated upon hypotonic stress. In contrast to tmem63b, does not show phospholipid scramblase activity. Required for the functional integrity of the kidney glomerular filtration barrier. This Danio rerio (Zebrafish) protein is Osmosensitive cation channel TMEM63C (tmem63c).